We begin with the raw amino-acid sequence, 486 residues long: V-type proton ATPase subunit B1 (486 aa).

The residue at position 2 (Gly-2) is an N-acetylglycine.

The protein belongs to the ATPase alpha/beta chains family. As to quaternary structure, V-ATPase is a heteromultimeric enzyme composed of a peripheral catalytic V1 complex (components A to H) attached to an integral membrane V0 proton pore complex (components: a, c, c'', d and e).

Its subcellular location is the vacuole membrane. Non-catalytic subunit of the peripheral V1 complex of vacuolar ATPase. V-ATPase is responsible for acidifying a variety of intracellular compartments in eukaryotic cells. The sequence is that of V-type proton ATPase subunit B1 (VHA-B1) from Arabidopsis thaliana (Mouse-ear cress).